The following is a 218-amino-acid chain: Glycerol-3-phosphate acyltransferase 2 (218 aa).

A run of 5 helical transmembrane segments spans residues 6–26, 50–70, 85–105, 115–135, and 159–179; these read YLLIFILAYLIGSFPTGVLVG, VMGPVAGSAVLVIDVLKGTLA, LLLIAGACAILGHTFSIFLKF, AGVFLGYNLKFFGLCALVFLP, and FWFHDIFLTIITGIMMILLFV.

This sequence belongs to the PlsY family. In terms of assembly, probably interacts with PlsX.

The protein resides in the cell membrane. The catalysed reaction is an acyl phosphate + sn-glycerol 3-phosphate = a 1-acyl-sn-glycero-3-phosphate + phosphate. It functions in the pathway lipid metabolism; phospholipid metabolism. In terms of biological role, catalyzes the transfer of an acyl group from acyl-phosphate (acyl-PO(4)) to glycerol-3-phosphate (G3P) to form lysophosphatidic acid (LPA). This enzyme utilizes acyl-phosphate as fatty acyl donor, but not acyl-CoA or acyl-ACP. This chain is Glycerol-3-phosphate acyltransferase 2, found in Lactobacillus johnsonii (strain CNCM I-12250 / La1 / NCC 533).